The sequence spans 27 residues: uncharacterized protein (27 aa).

The protein resides in the plastid. The protein localises to the chloroplast. This is an uncharacterized protein from Trieres chinensis (Marine centric diatom).